Reading from the N-terminus, the 130-residue chain is Small ribosomal subunit protein uS9 (130 aa).

The protein belongs to the universal ribosomal protein uS9 family.

This chain is Small ribosomal subunit protein uS9, found in Pectobacterium atrosepticum (strain SCRI 1043 / ATCC BAA-672) (Erwinia carotovora subsp. atroseptica).